Here is a 344-residue protein sequence, read N- to C-terminus: Putative voltage-gated potassium channel subunit beta (344 aa).

NADP(+) is bound by residues Trp33, Asp62, Tyr67, Ser167, Gln193, Trp222, Ser223, Pro224, Leu225, Lys233, Arg243, Gly301, Ser303, Gln307, Glu310, and Asn311. Tyr67 functions as the Proton donor/acceptor in the catalytic mechanism.

The protein belongs to the shaker potassium channel beta subunit family. In terms of assembly, forms heteromultimeric complexes with potassium channel alpha subunits.

The protein localises to the cytoplasm. The protein resides in the nucleus. Probable accessory potassium channel protein which modulates the activity of the pore-forming alpha subunit. This chain is Putative voltage-gated potassium channel subunit beta, found in Schizosaccharomyces pombe (strain 972 / ATCC 24843) (Fission yeast).